A 689-amino-acid polypeptide reads, in one-letter code: DNA ligase (689 aa).

NAD(+) is bound by residues 40–44 (DSEYD), 89–90 (SL), and glutamate 121. Residue lysine 123 is the N6-AMP-lysine intermediate of the active site. Residues arginine 144, glutamate 179, lysine 295, and lysine 319 each coordinate NAD(+). 4 residues coordinate Zn(2+): cysteine 413, cysteine 416, cysteine 431, and cysteine 437. Residues 610–689 (REQNILTGKI…VEWLAFIKNA (80 aa)) form the BRCT domain.

The protein belongs to the NAD-dependent DNA ligase family. LigA subfamily. Mg(2+) serves as cofactor. The cofactor is Mn(2+).

The catalysed reaction is NAD(+) + (deoxyribonucleotide)n-3'-hydroxyl + 5'-phospho-(deoxyribonucleotide)m = (deoxyribonucleotide)n+m + AMP + beta-nicotinamide D-nucleotide.. Functionally, DNA ligase that catalyzes the formation of phosphodiester linkages between 5'-phosphoryl and 3'-hydroxyl groups in double-stranded DNA using NAD as a coenzyme and as the energy source for the reaction. It is essential for DNA replication and repair of damaged DNA. The protein is DNA ligase of Rickettsia prowazekii (strain Madrid E).